Reading from the N-terminus, the 241-residue chain is Megakaryocyte and platelet inhibitory receptor G6b (241 aa).

Residues 1 to 17 (MAVFLQLLPLLLSRAQG) form the signal peptide. Topologically, residues 18–142 (NPGASLDGRP…GPTHGSVYPQ (125 aa)) are extracellular. N-linked (GlcNAc...) asparagine glycosylation occurs at Asn32. The helical transmembrane segment at 143 to 163 (LLIPLLGAGLVLGLGALGLVW) threads the bilayer. Residues 164–241 (WLHRRLPPQP…DASTIYAVVV (78 aa)) are Cytoplasmic-facing. Short sequence motifs (ITIM motif) lie at residues 209-214 (LLYADL) and 235-240 (TIYAVV). Tyr211 is modified (phosphotyrosine).

In terms of assembly, interacts (via ITIM motif) with PTPN6 and PTPN11. Binds to heparin. Post-translationally, all isoforms are N-glycosylated. In terms of processing, isoform E is O-glycosylated. Phosphorylated. Expressed in platelets. Expressed in a restricted set of hematopoietic cell lines including the erythroleukemia cell line K-562 and the T-cell leukemia cell lines MOLT-4 and Jurkat. Not detected in the monocyte-like cell line U-937, the B-cell-like cell line Raji, the fibroblast cell lines TK and HeLa, or the natural killer cell lines NKL, NK 62 and YT.

The protein localises to the endoplasmic reticulum. It is found in the golgi apparatus. It localises to the cell membrane. In terms of biological role, inhibitory receptor that acts as a critical regulator of hematopoietic lineage differentiation, megakaryocyte function and platelet production. Inhibits platelet aggregation and activation by agonists such as ADP and collagen-related peptide. This regulation of megakaryocate function as well as platelet production ann activation is done through the inhibition (via the 2 ITIM motifs) of the receptors CLEC1B and GP6:FcRgamma signaling. Appears to operate in a calcium-independent manner. Functionally, isoform B, displayed in this entry, is the only isoform to contain both a transmembrane region and 2 immunoreceptor tyrosine-based inhibitor motifs (ITIMs) and, thus, the only one which probably has a role of inhibitory receptor. Isoform A may be the activating counterpart of isoform B. The protein is Megakaryocyte and platelet inhibitory receptor G6b of Homo sapiens (Human).